A 79-amino-acid chain; its full sequence is Large ribosomal subunit protein bL31 (79 aa).

Positions 16, 18, 37, and 40 each coordinate Zn(2+).

The protein belongs to the bacterial ribosomal protein bL31 family. Type A subfamily. Part of the 50S ribosomal subunit. Zn(2+) serves as cofactor.

In terms of biological role, binds the 23S rRNA. The sequence is that of Large ribosomal subunit protein bL31 from Coxiella burnetii (strain CbuG_Q212) (Coxiella burnetii (strain Q212)).